Here is a 249-residue protein sequence, read N- to C-terminus: Thioesterase TesA (249 aa).

Active-site residues include Ser92, Asp196, and His224.

Belongs to the thioesterase family.

The catalysed reaction is a fatty acyl-CoA + H2O = a fatty acid + CoA + H(+). Functionally, involved in the synthesis of both phthiocerol dimycocerosates (PDIMs) and phenolic glycolipids (PGLs), which are structurally related lipids non-covalently bound to the outer cell wall layer of M.tuberculosis and are important virulence factors. This chain is Thioesterase TesA, found in Mycobacterium marinum (strain ATCC BAA-535 / M).